A 126-amino-acid polypeptide reads, in one-letter code: Large ribosomal subunit protein bL12 (126 aa).

Belongs to the bacterial ribosomal protein bL12 family. As to quaternary structure, homodimer. Part of the ribosomal stalk of the 50S ribosomal subunit. Forms a multimeric L10(L12)X complex, where L10 forms an elongated spine to which 2 to 4 L12 dimers bind in a sequential fashion. Binds GTP-bound translation factors.

Functionally, forms part of the ribosomal stalk which helps the ribosome interact with GTP-bound translation factors. Is thus essential for accurate translation. The chain is Large ribosomal subunit protein bL12 from Legionella pneumophila (strain Paris).